We begin with the raw amino-acid sequence, 141 residues long: uncharacterized protein (141 aa).

Transmembrane regions (helical) follow at residues 12-32 and 35-55; these read GIAG…TLVT and PGRV…SATW.

It localises to the cell membrane. This is an uncharacterized protein from Mycobacterium tuberculosis (strain CDC 1551 / Oshkosh).